Here is a 676-residue protein sequence, read N- to C-terminus: Putative Xaa-Pro dipeptidyl-peptidase (676 aa).

Active-site charge relay system residues include serine 224, aspartate 330, and histidine 361. A disordered region spans residues 423 to 450 (RPGTGTQAGVGTLGLRTGSGTETFTDDP).

Belongs to the peptidase S15 family.

The enzyme catalyses Hydrolyzes Xaa-Pro-|- bonds to release unblocked, N-terminal dipeptides from substrates including Ala-Pro-|-p-nitroanilide and (sequentially) Tyr-Pro-|-Phe-Pro-|-Gly-Pro-|-Ile.. In Streptomyces avermitilis (strain ATCC 31267 / DSM 46492 / JCM 5070 / NBRC 14893 / NCIMB 12804 / NRRL 8165 / MA-4680), this protein is Putative Xaa-Pro dipeptidyl-peptidase.